Here is a 734-residue protein sequence, read N- to C-terminus: MKTTNVKNNNNNINNTDEEIKIKNNYNQNDERLKKIKENKFDWALFKRFINIIKILYAKPVIPLTLFLILFGNGFAQTYVSKFTGILLADIYASFTSGDKVFFLSSVLKAGFAIGGSALLAAIINFIVSIMAWNWRKTLCLYIQNVYFKKSLFYKILAFDDRIDNPDQRITSDIDNFTTLLASIVSQCITGPMVVVYYTYLCYTTIDWYAPLIVYGFFFLGYLINKLVMSPMVSINYLQDKLEGDFRSLHQRIRNFSESIALYSLSKEKQHPEKRFDNNDYDHGYESDDSDQSCDESTTIINRKKNKGSQYYKNKNSTSKKINDFIDKLSGDSNDQKEELLVEEEQAKIQFEALLKNKKRVIFWQLGLNTTSDLFTYLSPIANYFIIAIPVFFLNNKSVLQPGDVTVQSYNCIMLASGFSQYINVSQSISDLSGYISRISSMIEVCKKIMEDVSLDADITKLNEKVAQTHNNDAIINTGSSGNISLNNGDSITLDDVTYFTPKGNQLYSKISINVKRGNNLLIMGPSGSGKSSLIRIINGLWPFFKGSIDRPENGDMFFLPQQPYLIFGTLEEQILYPFSKKQKRIPKSIMRELFQRFEIDYLLDRERFIKKSAQVNDLTHNWLNQLSPGEQQLIAIIRLIYHKPKFALMDESTSSIPQSLEERVYYVAKELGITIISVGHRISLLKYHSTLLRFDKDKNWYLEDIINQNNQSNNINNNNNNNTNKIAEDSVFD.

4 consecutive transmembrane segments (helical) span residues 52-72 (IIKI…ILFG), 112-132 (FAIG…SIMA), 177-197 (FTTL…VVVY), and 204-224 (TTID…GYLI). The ABC transmembrane type-1 domain maps to 63–351 (PLTLFLILFG…VEEEQAKIQF (289 aa)). The span at 271–286 (HPEKRFDNNDYDHGYE) shows a compositional bias: basic and acidic residues. Residues 271 to 296 (HPEKRFDNNDYDHGYESDDSDQSCDE) are disordered. Residues 332-359 (DSNDQKEELLVEEEQAKIQFEALLKNKK) adopt a coiled-coil conformation. The chain crosses the membrane as a helical span at residues 374 to 394 (LFTYLSPIANYFIIAIPVFFL). Residues 492-729 (ITLDDVTYFT…NNNNTNKIAE (238 aa)) form the ABC transporter domain. 525 to 532 (GPSGSGKS) is an ATP binding site. Low complexity predominate over residues 712–725 (QSNNINNNNNNNTN). Positions 712–734 (QSNNINNNNNNNTNKIAEDSVFD) are disordered.

It belongs to the ABC transporter superfamily. ABCD family. Peroxisomal fatty acyl CoA transporter (TC 3.A.1.203) subfamily.

The protein resides in the membrane. The catalysed reaction is (9Z)-octadecenoyl-CoA(in) = (9Z)-octadecenoyl-CoA(out). The polypeptide is ABC transporter D family member 1 (abcD1) (Dictyostelium discoideum (Social amoeba)).